The sequence spans 500 residues: MEADGQKYSVLAKTQVREKMMKEIEQISEVFLVSKSDATVILIRLGWNSFKASDLLGDNKEKFLAKLGLARVLNSNSSSADRETGDGDYLVSTPFCSHKFSTTCWSEYLSDALKKNKEQRGLISCLSQDCVASVGPDTIEQLTEPVKEMYENYILESFMECHKATIKWCPASGCEYAVELQEDGNEDNVISVVCLCGHTFCWTCGLESHRPVSCKKASIWWTYLLDQSRSISWIHTNTKSCPKCKIPVQQNGDPNYRLINCICSNNFCWICLRTEEQHQGNWNCSPVAVPAAGPSTVEFSQILHLNLWEAGHEALKKAKSKLRALEEKIIPKLIENCGATELDIRTVREAGMLSVQCRQVLKWSCVFDYSIIEYESTKKQYLKHLRALASTMLCMHEGKLDELIHLALSPEDFTNYKHKLEISTTCTGNHFDGFIKELEDGKPEVKADGYENEPGSRWFCDRCTFENSWVDKQCKMCFFPLDYHPSPQVAAAPEDLGKSE.

The segment at 74 to 288 (NSNSSSADRE…QGNWNCSPVA (215 aa)) is TRIAD supradomain. Residues 78 to 130 (SSADRETGDGDYLVSTPFCSHKFSTTCWSEYLSDALKKNKEQRGLISCLSQDC) form an RING-type 1 zinc finger. Residues Cys96, His98, Cys125, Cys130, Cys169, Cys174, Cys194, Cys196, Cys201, Cys204, His209, Cys214, Cys241, Cys244, Cys261, Cys263, Cys268, Cys271, His278, and Cys284 each contribute to the Zn(2+) site. An IBR-type zinc finger spans residues 148 to 214 (EMYENYILES…GLESHRPVSC (67 aa)). An RING-type 2; atypical zinc finger spans residues 241–271 (CPKCKIPVQQNGDPNYRLINCICSNNFCWIC). The RanBP2-type zinc-finger motif lies at 453–483 (EPGSRWFCDRCTFENSWVDKQCKMCFFPLDY).

Belongs to the RBR family. Ariadne subfamily. Zn(2+) serves as cofactor. In terms of tissue distribution, preferentially expressed in green siliques.

It carries out the reaction [E2 ubiquitin-conjugating enzyme]-S-ubiquitinyl-L-cysteine + [acceptor protein]-L-lysine = [E2 ubiquitin-conjugating enzyme]-L-cysteine + [acceptor protein]-N(6)-ubiquitinyl-L-lysine.. The protein operates within protein modification; protein ubiquitination. Its function is as follows. Might act as an E3 ubiquitin-protein ligase, or as part of E3 complex, which accepts ubiquitin from specific E2 ubiquitin-conjugating enzymes and then transfers it to substrates. The polypeptide is Probable E3 ubiquitin-protein ligase ARI16 (ARI16) (Arabidopsis thaliana (Mouse-ear cress)).